A 73-amino-acid chain; its full sequence is Translation initiation factor IF-1 (73 aa).

One can recognise an S1-like domain in the interval 1–73; sequence MAKKDGAIEV…SRGRIVYRYK (73 aa).

Belongs to the IF-1 family. In terms of assembly, component of the 30S ribosomal translation pre-initiation complex which assembles on the 30S ribosome in the order IF-2 and IF-3, IF-1 and N-formylmethionyl-tRNA(fMet); mRNA recruitment can occur at any time during PIC assembly.

Its subcellular location is the cytoplasm. Its function is as follows. One of the essential components for the initiation of protein synthesis. Stabilizes the binding of IF-2 and IF-3 on the 30S subunit to which N-formylmethionyl-tRNA(fMet) subsequently binds. Helps modulate mRNA selection, yielding the 30S pre-initiation complex (PIC). Upon addition of the 50S ribosomal subunit IF-1, IF-2 and IF-3 are released leaving the mature 70S translation initiation complex. In Mycobacterium avium (strain 104), this protein is Translation initiation factor IF-1.